Here is a 111-residue protein sequence, read N- to C-terminus: MKMLHQVLIACVIGGIMGILGHVKKRGRLEKPRMTKRFIYLGFLEDWFIGMTASILLVLSADPDSGIQLVILSIISGYGGEAVLRSFDFVRELNSGGEPAESKRQTKTPPE.

The next 3 helical transmembrane spans lie at 4–23 (LHQV…LGHV), 39–61 (IYLG…VLSA), and 65–84 (SGIQ…EAVL).

The protein localises to the cell membrane. This is an uncharacterized protein from Bacillus subtilis (strain 168).